The primary structure comprises 380 residues: Flap endonuclease 1 (380 aa).

The tract at residues 1-104 is N-domain; sequence MGIQGLAKLI…GELAKRSERR (104 aa). Arg-19 carries the post-translational modification Symmetric dimethylarginine; by PRMT5. Position 34 (Asp-34) interacts with Mg(2+). The DNA site is built by Arg-47 and Arg-70. Lys-80 is modified (N6-acetyllysine). Asp-86 contacts Mg(2+). Residues Arg-100 and Arg-104 each carry the symmetric dimethylarginine; by PRMT5 modification. Residues 122–253 form an I-domain region; that stretch reads EVEKFTKRLV…KRAVDLIQKH (132 aa). Mg(2+) contacts are provided by Glu-158, Glu-160, Asp-179, and Asp-181. Glu-158 is a binding site for DNA. Position 187 is a phosphoserine; by CDK2 (Ser-187). Arg-192 is subject to Symmetric dimethylarginine; by PRMT5. A Phosphoserine modification is found at Ser-197. DNA contacts are provided by Gly-231 and Asp-233. Mg(2+) is bound at residue Asp-233. 3 positions are modified to phosphoserine: Ser-255, Ser-293, and Ser-335. The segment at 327–380 is disordered; the sequence is RLSKSRQGSTQGRLDDFFKVTGSLSSAKRKEPEPKGSTKKKAKTGAAGKFKRGK. Position 336 is a phosphothreonine (Thr-336). Residues 336–344 form an interaction with PCNA region; it reads TQGRLDDFF. Lys-354 is subject to N6-acetyllysine. Residues 363–380 show a composition bias toward basic residues; that stretch reads STKKKAKTGAAGKFKRGK. Thr-364 is modified (phosphothreonine). N6-acetyllysine is present on residues Lys-375, Lys-377, and Lys-380.

The protein belongs to the XPG/RAD2 endonuclease family. FEN1 subfamily. In terms of assembly, interacts with PCNA. Three molecules of FEN1 bind to one PCNA trimer with each molecule binding to one PCNA monomer. PCNA stimulates the nuclease activity without altering cleavage specificity. The C-terminal domain binds EP300; can bind simultaneously to both PCNA and EP300. Interacts with DDX11; this interaction is direct and increases flap endonuclease activity of FEN1. Interacts with WDR4; regulating its endonuclease activity. Interacts with POLB. The cofactor is Mg(2+). In terms of processing, acetylated by EP300. Acetylation inhibits both endonuclease and exonuclease activity. Acetylation also reduces DNA-binding activity but does not affect interaction with PCNA or EP300. Phosphorylation upon DNA damage induces relocalization to the nuclear plasma. Phosphorylation at Ser-187 by CDK2 occurs during late S-phase and results in dissociation from PCNA. Post-translationally, methylation at Arg-192 by PRMT5 impedes Ser-187 phosphorylation and increases interaction with PCNA.

Its subcellular location is the nucleus. It localises to the nucleolus. The protein localises to the nucleoplasm. The protein resides in the mitochondrion. Its function is as follows. Structure-specific nuclease with 5'-flap endonuclease and 5'-3' exonuclease activities involved in DNA replication and repair. During DNA replication, cleaves the 5'-overhanging flap structure that is generated by displacement synthesis when DNA polymerase encounters the 5'-end of a downstream Okazaki fragment. It enters the flap from the 5'-end and then tracks to cleave the flap base, leaving a nick for ligation. Also involved in the long patch base excision repair (LP-BER) pathway, by cleaving within the apurinic/apyrimidinic (AP) site-terminated flap. Acts as a genome stabilization factor that prevents flaps from equilibrating into structures that lead to duplications and deletions. Also possesses 5'-3' exonuclease activity on nicked or gapped double-stranded DNA, and exhibits RNase H activity. Also involved in replication and repair of rDNA and in repairing mitochondrial DNA. This is Flap endonuclease 1 from Homo sapiens (Human).